Here is a 705-residue protein sequence, read N- to C-terminus: Probable cyclic nucleotide-gated ion channel 16 (705 aa).

Residues M1–H57 lie on the Cytoplasmic side of the membrane. The helical transmembrane segment at I58–I78 threads the bilayer. Over V79–R91 the chain is Extracellular. Residues F92–L112 traverse the membrane as a helical segment. Residues L113–E147 lie on the Cytoplasmic side of the membrane. The chain crosses the membrane as a helical span at residues F148–P168. The Extracellular segment spans residues N169–N180. The chain crosses the membrane as a helical span at residues H181–L201. The Cytoplasmic segment spans residues N202–Y222. A helical transmembrane segment spans residues N223–I243. Residues Q244–T353 lie on the Extracellular side of the membrane. Residues I354 to V374 form a helical membrane-spanning segment. Residues Q375–F705 lie on the Cytoplasmic side of the membrane. A nucleoside 3',5'-cyclic phosphate is bound by residues F457–K580 and E528. Residues F573 to Y588 form a calmodulin-binding region. The region spanning R593–E622 is the IQ domain. Disordered regions lie at residues E636–Q655 and R672–F705. Low complexity predominate over residues S642 to Q655.

It belongs to the cyclic nucleotide-gated cation channel (TC 1.A.1.5) family. Homotetramer or heterotetramer.

It is found in the cell membrane. In terms of biological role, putative cyclic nucleotide-gated ion channel. This chain is Probable cyclic nucleotide-gated ion channel 16 (CNGC16), found in Arabidopsis thaliana (Mouse-ear cress).